The sequence spans 321 residues: Olfactory receptor 5K4 (321 aa).

The Extracellular segment spans residues 1–25; the sequence is MARENHSLAAEFILIGFTNYPELKT. The N-linked (GlcNAc...) asparagine glycan is linked to asparagine 5. A helical transmembrane segment spans residues 26–46; that stretch reads LLFVVFSAIYLVTMVGNLGLV. The Cytoplasmic portion of the chain corresponds to 47–54; the sequence is ALIYVERR. The helical transmembrane segment at 55-75 threads the bilayer; that stretch reads LLTPMYIFLGNLALMDSCCSC. At 76–97 the chain is on the extracellular side; it reads AVTPKMLENFFSEDRIISLYEC. An intrachain disulfide couples cysteine 97 to cysteine 179. A helical transmembrane segment spans residues 98 to 118; that stretch reads MAQFYFLCLAETTDCFLLATM. The Cytoplasmic segment spans residues 119–139; the sequence is AYDRYVAICHPLQYHTMMSKT. The helical transmembrane segment at 140–160 threads the bilayer; that stretch reads LCIRMTTGAFKAGNLHSMIHV. The Extracellular segment spans residues 161-205; it reads GLLLRLTFCRSNKIHHFFCDILPLYRLSCTDPSINELMIYIFSIP. A helical membrane pass occupies residues 206 to 226; the sequence is IQIFTIATVLISYLCILLTVF. Residues 227-240 are Cytoplasmic-facing; that stretch reads KMKSKEGRGKAFST. A helical transmembrane segment spans residues 241-261; it reads CASHFLSVSIFYICLLMYIGP. The Extracellular segment spans residues 262-268; it reads SEEGDKD. The chain crosses the membrane as a helical span at residues 269 to 289; that stretch reads TPVAIFYAIVIPLLNPFIYSL. At 290-321 the chain is on the cytoplasmic side; the sequence is RNKEVINVLKKIMRNYNILKQTCSIANLFLIY.

It belongs to the G-protein coupled receptor 1 family.

It is found in the cell membrane. In terms of biological role, odorant receptor. This is Olfactory receptor 5K4 (OR5K4) from Homo sapiens (Human).